The chain runs to 540 residues: Probable H/ACA ribonucleoprotein complex subunit 4 (540 aa).

The interval 1–24 (MTTDKKSKSKSSEKSTQEVEQVIK) is disordered. Residue Asp109 is the Nucleophile of the active site. The 76-residue stretch at 280–355 (YKRIVVKDSA…VVATIKRVIM (76 aa)) folds into the PUA domain. The disordered stretch occupies residues 414–540 (SPVESMNVDT…DKKEKKKSKN (127 aa)). Residues 448–494 (KKEKKDKKEKKKDSSDDESEEEKSSKKDKKEKKEKKEKKEKKSSKDD) adopt a coiled-coil conformation. A compositionally biased stretch (basic residues) spans 473–489 (KKDKKEKKEKKEKKEKK). Composition is skewed to basic and acidic residues over residues 490-503 (SSKD…SKKE) and 513-528 (SDKD…DKKD). The span at 529 to 540 (KKDKKEKKKSKN) shows a compositional bias: basic residues.

This sequence belongs to the pseudouridine synthase TruB family. Component of the small nucleolar ribonucleoprotein particles containing H/ACA-type snoRNAs (H/ACA snoRNPs).

Its subcellular location is the nucleus. The protein localises to the nucleolus. The catalysed reaction is a uridine in RNA = a pseudouridine in RNA. In terms of biological role, plays a central role in ribosomal RNA processing. Probable catalytic subunit of H/ACA small nucleolar ribonucleoprotein (H/ACA snoRNP) complex, which catalyzes pseudouridylation of rRNA. This involves the isomerization of uridine such that the ribose is subsequently attached to C5, instead of the normal N1. Pseudouridine ('psi') residues may serve to stabilize the conformation of rRNAs. In Dictyostelium discoideum (Social amoeba), this protein is Probable H/ACA ribonucleoprotein complex subunit 4 (nola4).